A 90-amino-acid chain; its full sequence is Probable Fe(2+)-trafficking protein (90 aa).

It belongs to the Fe(2+)-trafficking protein family.

In terms of biological role, could be a mediator in iron transactions between iron acquisition and iron-requiring processes, such as synthesis and/or repair of Fe-S clusters in biosynthetic enzymes. This is Probable Fe(2+)-trafficking protein from Thioalkalivibrio sulfidiphilus (strain HL-EbGR7).